Reading from the N-terminus, the 459-residue chain is tRNA modification GTPase MnmE (459 aa).

3 residues coordinate (6S)-5-formyl-5,6,7,8-tetrahydrofolate: R23, E85, and R124. Positions 221–380 constitute a TrmE-type G domain; sequence GLSTAIIGRP…LEKAIADTFF (160 aa). Residue N231 participates in K(+) binding. Residues 231–236, 250–256, and 275–278 each bind GTP; these read NVGKSS, TEIPGTT, and DTAG. S235 lines the Mg(2+) pocket. K(+) contacts are provided by T250, I252, and T255. T256 serves as a coordination point for Mg(2+). Position 459 (K459) interacts with (6S)-5-formyl-5,6,7,8-tetrahydrofolate.

The protein belongs to the TRAFAC class TrmE-Era-EngA-EngB-Septin-like GTPase superfamily. TrmE GTPase family. Homodimer. Heterotetramer of two MnmE and two MnmG subunits. K(+) is required as a cofactor.

It localises to the cytoplasm. Its function is as follows. Exhibits a very high intrinsic GTPase hydrolysis rate. Involved in the addition of a carboxymethylaminomethyl (cmnm) group at the wobble position (U34) of certain tRNAs, forming tRNA-cmnm(5)s(2)U34. In Oceanobacillus iheyensis (strain DSM 14371 / CIP 107618 / JCM 11309 / KCTC 3954 / HTE831), this protein is tRNA modification GTPase MnmE.